Here is a 429-residue protein sequence, read N- to C-terminus: Cyclin-B2-3 (429 aa).

The span at 86 to 101 (ADHKPHIRDEETKKPD) shows a compositional bias: basic and acidic residues. The disordered stretch occupies residues 86–109 (ADHKPHIRDEETKKPDSVSSEEPE).

The protein belongs to the cyclin family. Cyclin AB subfamily.

The sequence is that of Cyclin-B2-3 (CYCB2-3) from Arabidopsis thaliana (Mouse-ear cress).